The primary structure comprises 518 residues: MPPRFNDSWYYPDDIAHDLDGVEGLSEALKQEAYACAWEYTRCVIPQYTNWDRYVAFMRTIIIGIIAEFRGELVDVAASDSIMGCYSLSAVLDALFEGTPGRELMVREYKTFLLVTSEKTSKRRDSELFRRYVNGLAASPRSWFRMRDCDALARFSLAAALACNDMYDVFPTDEQFELLTEIGDTLYDAVAFYKHRSEGETNNTFAYVPADMRIQAFRVAREMLWALDVAYAHKPEGAILVNFIRFFGGPIHMMMRRYRFVEEDLTVGKPETAAVVAETRRNFKLWNRVDAQVAAPGQTSSDNSSDNRSSSISSTSSTGTDGSGAGDASSVHSSGVHSDATSIEPEKEDQSSVFEAPGADRFRSLLARSKELMFPELRAYLSRSGEPHCNRCLYRSSYGAQQIHRFGGVELCRGCRAMWRGYVESLPERVQEAFPDVVLKAPPPPSPRRAVPADGEADSAAGQRSKRLREDLTAAGEYTTVAETVPAEDVPRSAPDIMEDVLQAECAIDDMRSAVAVF.

Disordered regions lie at residues 294-355 (AAPG…SVFE) and 440-466 (KAPP…QRSK). Over residues 299–339 (TSSDNSSDNRSSSISSTSSTGTDGSGAGDASSVHSSGVHSD) the composition is skewed to low complexity.

It belongs to the alpha-ionylideneethane synthase family.

The protein operates within hormone biosynthesis. Its function is as follows. Alpha-ionylideneethane synthase involved in the biosynthesis of abscisic acid (ABA), a phytohormone that acts antagonistically toward salicylic acid (SA), jasmonic acid (JA) and ethylene (ETH) signaling, to impede plant defense responses. During pathogen-host interaction, ABA plays a dual role in disease severity by increasing plant susceptibility and accelerating pathogenesis in the fungus itself. The first step of the pathway catalyzes the reaction from farnesyl diphosphate to alpha-ionylideneethane performed by the alpha-ionylideneethane synthase ABA3 via a three-step reaction mechanism involving 2 neutral intermediates, beta-farnesene and allofarnesene. The cytochrome P450 monooxygenase ABA1 might then be involved in the conversion of alpha-ionylideneethane to alpha-ionylideneacetic acid. Alpha-ionylideneacetic acid is further converted to abscisic acid in 2 steps involving the cytochrome P450 monooxygenase ABA2 and the short-chain dehydrogenase/reductase ABA4, via the intermediates 1'-deoxy-ABA or 1',4'-trans-diol-ABA, depending on the order of action of these 2 enzymes. ABA2 is responsible for the hydroxylation of carbon atom C-1' and ABA4 might be involved in the oxidation of the C-4' carbon atom. The polypeptide is Alpha-ionylideneethane synthase abl3 (Pyricularia oryzae (strain Y34) (Rice blast fungus)).